The primary structure comprises 310 residues: L-lactate dehydrogenase (310 aa).

NAD(+) is bound by residues Met10–Val11, Asp32, Tyr62, and Gly76–Val77. Residues Gln79, Arg85, and Asn117–Asp120 each bind substrate. NAD(+)-binding positions include Ala115–Asn117 and Ser140. Asp145 to Arg148 is a binding site for substrate. Residues Arg150 and Gln162–Tyr167 contribute to the beta-D-fructose 1,6-bisphosphate site. The Proton acceptor role is filled by His172. Residue Tyr218 is modified to Phosphotyrosine. Residue Thr227 participates in substrate binding.

This sequence belongs to the LDH/MDH superfamily. LDH family. As to quaternary structure, homotetramer.

It is found in the cytoplasm. The catalysed reaction is (S)-lactate + NAD(+) = pyruvate + NADH + H(+). It functions in the pathway fermentation; pyruvate fermentation to lactate; (S)-lactate from pyruvate: step 1/1. Its activity is regulated as follows. Allosterically activated by fructose 1,6-bisphosphate (FBP). It binds two fructose 1,6-bisphosphate (FBP) molecules per tetramer. Its function is as follows. Catalyzes the conversion of lactate to pyruvate. This chain is L-lactate dehydrogenase, found in Thermus caldophilus.